A 127-amino-acid chain; its full sequence is Holo-[acyl-carrier-protein] synthase (127 aa).

Mg(2+) contacts are provided by Asp-9 and Glu-58.

It belongs to the P-Pant transferase superfamily. AcpS family. Mg(2+) is required as a cofactor.

Its subcellular location is the cytoplasm. The catalysed reaction is apo-[ACP] + CoA = holo-[ACP] + adenosine 3',5'-bisphosphate + H(+). In terms of biological role, transfers the 4'-phosphopantetheine moiety from coenzyme A to a Ser of acyl-carrier-protein. The protein is Holo-[acyl-carrier-protein] synthase of Shewanella baltica (strain OS223).